The sequence spans 423 residues: MAFNPFALGRPDLLLPFMGAGVGGPGAGGPPPNLFFSMLQAGFPPGPVGSPPEDDGVTDDPKVELDERELWQQFSQCGTEMVITKSGRRIFPAYRVKISGLDKKSQYFVMMDLVPADEHRYKFNNSRWMIAGKADPEMPKTLYIHPDSPSTGEHWMSKGANFHKLKLTNNISDKHGYTILNSMHKYQPRLHVVRCADRHNLMYSTFRTFVFRETEFIAVTAYQNEKVTELKIENNPFAKGFRDAGAGKREKKRQLHRMNGDATQSPPGKTASLPTHSPHPSESNSEDDEPTLKKCKPEPSQTPTTSSLSTSTTPTLSAHHPLRSPQFCIPPPIDMMYQNMPMDLLAHWQMATLFPQFSMALNSPAAAASLLSKHLAKASSECKVEATSEDSEEAEKPEVKKEQKSVTPPKKGGFDVLDLLSKP.

A DNA-binding region (T-box) is located at residues 70 to 243 (LWQQFSQCGT…NNPFAKGFRD (174 aa)). Disordered stretches follow at residues 238-324 (AKGF…PLRS) and 384-423 (VEAT…LSKP). Over residues 261 to 283 (DATQSPPGKTASLPTHSPHPSES) the composition is skewed to polar residues. Positions 302–317 (TPTTSSLSTSTTPTLS) are enriched in low complexity. The span at 394–404 (AEKPEVKKEQK) shows a compositional bias: basic and acidic residues.

In terms of processing, sumoylated. As to expression, expressed in body wall muscles and a subset of pharyngeal neurons. Expressed in head neurons and occassionally tail neurons. Not expressed in the pharynx.

The protein resides in the nucleus. Its function is as follows. Involved in the transcriptional regulation of genes required for the development of pharyngeal muscles derived from the ABa lineage. Acts as a transcriptional repressor and binds to T-box binding sites in its own promoter to negatively autoregulate its own expression in neurons, seam cells and the gut in order to restrict its expression to certain tissues. May function together with the nfya-1-NF-Y complex to repress its own expression. Plays a role in neural fate specification in the hermaphrodite-specific neuron (HSN)/PHB neuron lineage, acting in concert with homeobox protein egl-5 and the asymmetric cell division protein ham-1. This Caenorhabditis elegans protein is T-box protein 2.